Here is a 247-residue protein sequence, read N- to C-terminus: PF03932 family protein CutC (247 aa).

The segment covering 205–222 (KSTRPSLMESNSSAQMGS) has biased composition (polar residues). The interval 205–226 (KSTRPSLMESNSSAQMGSNDVD) is disordered.

The protein belongs to the CutC family.

It localises to the cytoplasm. This is PF03932 family protein CutC from Vibrio atlanticus (strain LGP32) (Vibrio splendidus (strain Mel32)).